The primary structure comprises 418 residues: Putative ion-transport protein YfeO (418 aa).

Transmembrane regions (helical) follow at residues 10-30 (LLLSLPAVAIGIASSLILIVV), 54-74 (DSPIWIIGVLTLTGIAVGLVI), 99-119 (ALPGLIVALILGLAGGVSLGP), 120-140 (EHPIMTVNIALAVAIGARLLP), 149-169 (ILASAGTIGALFGTPVAAALI), 186-206 (LFAPLMAAAAGALTTGLFFHP), 223-243 (ILSGAIVAAIAIAAGMVAVWC), 258-278 (VLVLGIGGFILGILGVIGGPV), 300-320 (DYFLLAVIKLAALVVAAASGF), 322-342 (GGRIFPAVFVGVALGLMLHEH), 343-363 (VPAVPAAITVSCAILGIVLVV), and 371-391 (LFMAAVVVPNTTLLPLLCIVM).

This sequence belongs to the chloride channel (TC 2.A.49) family.

The protein resides in the cell membrane. The protein is Putative ion-transport protein YfeO of Shigella sonnei (strain Ss046).